Here is a 195-residue protein sequence, read N- to C-terminus: Imidazoleglycerol-phosphate dehydratase (195 aa).

The protein belongs to the imidazoleglycerol-phosphate dehydratase family.

Its subcellular location is the cytoplasm. It catalyses the reaction D-erythro-1-(imidazol-4-yl)glycerol 3-phosphate = 3-(imidazol-4-yl)-2-oxopropyl phosphate + H2O. Its pathway is amino-acid biosynthesis; L-histidine biosynthesis; L-histidine from 5-phospho-alpha-D-ribose 1-diphosphate: step 6/9. This Thiobacillus denitrificans (strain ATCC 25259 / T1) protein is Imidazoleglycerol-phosphate dehydratase.